The sequence spans 520 residues: Maturase K (520 aa).

The protein belongs to the intron maturase 2 family. MatK subfamily.

Its subcellular location is the plastid. It localises to the chloroplast. In terms of biological role, usually encoded in the trnK tRNA gene intron. Probably assists in splicing its own and other chloroplast group II introns. The sequence is that of Maturase K from Cycas taitungensis (Prince sago).